The following is a 310-amino-acid chain: Alpha/beta hydrolase domain-containing protein 17A (310 aa).

Positions 38–61 (VPEPEPGPGGAGAAPSGPLRTSAA) are disordered. Active-site charge relay system residues include S190, D255, and H284. S307 carries the post-translational modification Phosphoserine.

This sequence belongs to the AB hydrolase superfamily. ABHD17 family. Post-translationally, palmitoylated on cysteine residues located in a cysteine cluster at the N-terminus which promotes membrane localization. Palmitoylation is required for post-synaptic localization and for depalmitoylating activity towards DLG4/PSD95.

The protein resides in the cell membrane. Its subcellular location is the endosome membrane. It is found in the cell projection. It localises to the dendritic spine. The protein localises to the postsynaptic density membrane. It carries out the reaction S-hexadecanoyl-L-cysteinyl-[protein] + H2O = L-cysteinyl-[protein] + hexadecanoate + H(+). Hydrolyzes fatty acids from S-acylated cysteine residues in proteins. Has depalmitoylating activity towards NRAS. Has depalmitoylating activity towards DLG4/PSD95. May have depalmitoylating activity towars MAP6. The protein is Alpha/beta hydrolase domain-containing protein 17A of Mus musculus (Mouse).